The following is a 221-amino-acid chain: Intraflagellar transport-associated protein (221 aa).

A Phosphoserine modification is found at S59.

Interacts with IFT122; the interaction associates IFTAP with IFT-A complex.

Its function is as follows. Seems to play a role in ciliary BBSome localization, maybe through interaction with IFT-A complex. This is Intraflagellar transport-associated protein from Homo sapiens (Human).